The following is an 877-amino-acid chain: Alpha-glucosidase (877 aa).

The first 23 residues, 1–23, serve as a signal peptide directing secretion; the sequence is MATVGVLLLCLCLCLFAPRLCSS. A disordered region spans residues 89-115; it reads VPQDIIPRPAPGDVLHDAPPASSAPLQ. N-linked (GlcNAc...) asparagine glycans are attached at residues Asn-191, Asn-298, Asn-338, and Asn-391. Catalysis depends on residues Asp-437 and Glu-440. N-linked (GlcNAc...) asparagine glycosylation occurs at Asn-471. Asp-534 serves as the catalytic Proton donor. A glycan (N-linked (GlcNAc...) asparagine) is linked at Asn-570.

It belongs to the glycosyl hydrolase 31 family. In terms of tissue distribution, high levels seen in the aleurone and scutellum after germination, while low levels are found in developing seeds.

It catalyses the reaction Hydrolysis of terminal, non-reducing (1-&gt;4)-linked alpha-D-glucose residues with release of alpha-D-glucose.. This chain is Alpha-glucosidase, found in Hordeum vulgare (Barley).